The following is a 385-amino-acid chain: 1-deoxy-D-xylulose 5-phosphate reductoisomerase 1 (385 aa).

Thr-11, Gly-12, Ser-13, Ile-14, Asn-39, and Asn-122 together coordinate NADPH. 1-deoxy-D-xylulose 5-phosphate is bound at residue Lys-123. Residue Glu-124 coordinates NADPH. Position 148 (Asp-148) interacts with Mn(2+). 1-deoxy-D-xylulose 5-phosphate-binding residues include Ser-149, Glu-150, Ser-174, and His-197. Glu-150 is a binding site for Mn(2+). Residue Gly-203 coordinates NADPH. Positions 210, 215, 216, and 219 each coordinate 1-deoxy-D-xylulose 5-phosphate. Glu-219 is a Mn(2+) binding site.

The protein belongs to the DXR family. Mg(2+) is required as a cofactor. Requires Mn(2+) as cofactor.

The catalysed reaction is 2-C-methyl-D-erythritol 4-phosphate + NADP(+) = 1-deoxy-D-xylulose 5-phosphate + NADPH + H(+). It participates in isoprenoid biosynthesis; isopentenyl diphosphate biosynthesis via DXP pathway; isopentenyl diphosphate from 1-deoxy-D-xylulose 5-phosphate: step 1/6. Catalyzes the NADPH-dependent rearrangement and reduction of 1-deoxy-D-xylulose-5-phosphate (DXP) to 2-C-methyl-D-erythritol 4-phosphate (MEP). The protein is 1-deoxy-D-xylulose 5-phosphate reductoisomerase 1 of Bacillus thuringiensis subsp. konkukian (strain 97-27).